We begin with the raw amino-acid sequence, 84 residues long: Small ribosomal subunit protein uS17 (84 aa).

The protein belongs to the universal ribosomal protein uS17 family. In terms of assembly, part of the 30S ribosomal subunit.

Functionally, one of the primary rRNA binding proteins, it binds specifically to the 5'-end of 16S ribosomal RNA. The polypeptide is Small ribosomal subunit protein uS17 (Pectobacterium atrosepticum (strain SCRI 1043 / ATCC BAA-672) (Erwinia carotovora subsp. atroseptica)).